The chain runs to 256 residues: MKEILITNDDGFEALGIRALRNALKDIAKVTVVAPSSEKSACAHSITLTRPLRFIQLDDGFFKLDDATPSDCIYLALETMYKHKKPDLIISGINHGANLGEDITYSGTCGGAMEGTLQGVASMAISLLYKNDSIDKYGFDLACEISADIVKNIFENGFPLNGREFLNLNIPAVPKNEYKGLKIVPAGHQAYNTNAELHRNPRGLEYYWLGTPNIHYLKENDNECDLAVTFDGYASLTPIKLDMTAHHSINRLKSWI.

Residues Asp9, Asp10, Ser40, and Asn94 each contribute to the a divalent metal cation site.

This sequence belongs to the SurE nucleotidase family. It depends on a divalent metal cation as a cofactor.

The protein localises to the cytoplasm. It catalyses the reaction a ribonucleoside 5'-phosphate + H2O = a ribonucleoside + phosphate. Functionally, nucleotidase that shows phosphatase activity on nucleoside 5'-monophosphates. The protein is 5'-nucleotidase SurE of Campylobacter fetus subsp. fetus (strain 82-40).